We begin with the raw amino-acid sequence, 1214 residues long: Protein argonaute-2 (1214 aa).

The interval 1–412 (MGKKDKNKKG…GSIKRGTIGK (412 aa)) is disordered. Low complexity-rich tracts occupy residues 18 to 93 (PQPQ…QQKS) and 107 to 117 (KQQVQGWTKQG). Gly residues-rich tracts occupy residues 118 to 131 (QQGGHQQGRQGQDG), 141 to 154 (QQGGHQQGRQGQEG), 164 to 177 (QQGGHQQGRQGQEG), 187 to 200 (QQGGHQQGRQGQEG), 210 to 223 (QQGGHQQGRQGQEG), 233 to 246 (QQGGHQQGRQGQEG), and 256 to 269 (QQGGHQQGRQGQEG). The span at 270–282 (GYQQRPPGQQQGG) shows a compositional bias: low complexity. 3 stretches are compositionally biased toward gly residues: residues 302–315 (QQGGHQQGRQGQEG), 325–338 (QQGGHQQGRQGQEG), and 348–361 (QQGGHQQGRQGQEG). A compositionally biased stretch (low complexity) spans 362–394 (GYQQRPPGQQPNQTQSQGQYQSRGPPQQQQAAP). The region spanning 608-717 (LERFSLKAKI…LPIELCSIEE (110 aa)) is the PAZ domain. The interaction with guide RNA stretch occupies residues 681–686 (YFHSRN). One can recognise a Piwi domain in the interval 885-1186 (LAIVIIPQFR…ARGRVYLTGT (302 aa)). A divalent metal cation contacts are provided by aspartate 965 and aspartate 1037. 3 interaction with guide RNA regions span residues 1075 to 1076 (KR), 1119 to 1127 (HQAIQGTAK), and 1156 to 1178 (FPRCNRSVSYPAPAYLAHLVAAR). Residue histidine 1173 coordinates a divalent metal cation.

Belongs to the argonaute family. Ago subfamily. Interacts with Fmr1, Dcr-1 and vig to form the RNA-induced silencing complex (RISC), a ribonucleoprotein (RNP) complex involved in translation regulation, other components of the complex are RpL5, RpL11 and Rm62. As part of the RISC complex, interacts with Tudor-SN. Interacts with Taf11. As to quaternary structure, (Microbial infection) Interacts with cricket paralysis virus protein 1A; this interaction may block the RISC activity. The cofactor is Mg(2+). Mn(2+) is required as a cofactor.

Its subcellular location is the nucleus. The protein localises to the cytoplasm. It localises to the cytoplasmic ribonucleoprotein granule. Its function is as follows. Essential for RNA interference (RNAi); double-stranded RNA induces potent and specific gene silencing. RNAi is mediated by the RNA-induced silencing complex (RISC), a sequence-specific, multicomponent nuclease that destroys or silences messenger RNAs homologous to the silencing trigger. The protein is Protein argonaute-2 of Drosophila melanogaster (Fruit fly).